The sequence spans 409 residues: Aspartate aminotransferase, cytoplasmic (409 aa).

Ser-2 carries the post-translational modification N-acetylserine. Residues Gly-38, Trp-138, and Asn-191 each coordinate L-aspartate. Residue Lys-255 is modified to N6-(pyridoxal phosphate)lysine. Residue Arg-383 participates in L-aspartate binding. Position 385 is a phosphoserine (Ser-385).

It belongs to the class-I pyridoxal-phosphate-dependent aminotransferase family. Homodimer. It depends on pyridoxal 5'-phosphate as a cofactor.

Its subcellular location is the cytoplasm. The enzyme catalyses L-aspartate + 2-oxoglutarate = oxaloacetate + L-glutamate. Functionally, plays a key role in amino acid metabolism. The chain is Aspartate aminotransferase, cytoplasmic from Schizosaccharomyces pombe (strain 972 / ATCC 24843) (Fission yeast).